The following is a 375-amino-acid chain: Queuine tRNA-ribosyltransferase (375 aa).

D89 functions as the Proton acceptor in the catalytic mechanism. Substrate is bound by residues 89-93, D143, Q187, and G214; that span reads DSGGF. Positions 245-251 are RNA binding; sequence GVGKPED. The Nucleophile role is filled by D264. Positions 269-273 are RNA binding; important for wobble base 34 recognition; it reads TRNAR. Zn(2+)-binding residues include C302, C304, C307, and H333.

This sequence belongs to the queuine tRNA-ribosyltransferase family. Homodimer. Within each dimer, one monomer is responsible for RNA recognition and catalysis, while the other monomer binds to the replacement base PreQ1. Zn(2+) is required as a cofactor.

The enzyme catalyses 7-aminomethyl-7-carbaguanine + guanosine(34) in tRNA = 7-aminomethyl-7-carbaguanosine(34) in tRNA + guanine. It functions in the pathway tRNA modification; tRNA-queuosine biosynthesis. In terms of biological role, catalyzes the base-exchange of a guanine (G) residue with the queuine precursor 7-aminomethyl-7-deazaguanine (PreQ1) at position 34 (anticodon wobble position) in tRNAs with GU(N) anticodons (tRNA-Asp, -Asn, -His and -Tyr). Catalysis occurs through a double-displacement mechanism. The nucleophile active site attacks the C1' of nucleotide 34 to detach the guanine base from the RNA, forming a covalent enzyme-RNA intermediate. The proton acceptor active site deprotonates the incoming PreQ1, allowing a nucleophilic attack on the C1' of the ribose to form the product. After dissociation, two additional enzymatic reactions on the tRNA convert PreQ1 to queuine (Q), resulting in the hypermodified nucleoside queuosine (7-(((4,5-cis-dihydroxy-2-cyclopenten-1-yl)amino)methyl)-7-deazaguanosine). This is Queuine tRNA-ribosyltransferase from Salmonella enteritidis PT4 (strain P125109).